Reading from the N-terminus, the 335-residue chain is Teichoic acids export ATP-binding protein TagH (335 aa).

Positions 26-246 (IKGLFMPKSQ…YDEFVKWFNK (221 aa)) constitute an ABC transporter domain. Residue 60-67 (GINGSGKS) participates in ATP binding.

Belongs to the ABC transporter superfamily. Teichoic acids exporter (TC 3.A.1.104.1) family. As to quaternary structure, the complex is composed of two ATP-binding proteins (TagH) and two transmembrane proteins (TagG).

The protein localises to the cell membrane. It carries out the reaction ATP + H2O + teichoic acidSide 1 = ADP + phosphate + teichoic acidSide 2.. Functionally, part of the ABC transporter complex TagGH involved in teichoic acids export. Responsible for energy coupling to the transport system. The chain is Teichoic acids export ATP-binding protein TagH from Listeria innocua serovar 6a (strain ATCC BAA-680 / CLIP 11262).